A 616-amino-acid chain; its full sequence is Chaperone protein DnaK (616 aa).

At T174 the chain carries Phosphothreonine; by autocatalysis. The interval 576-616 is disordered; it reads QASAPGAGPEGASGGFGGENKKDDNVVDADYTVIDDDKKKT. Over residues 583–593 the composition is skewed to gly residues; it reads GPEGASGGFGG.

Belongs to the heat shock protein 70 family.

Its function is as follows. Acts as a chaperone. The chain is Chaperone protein DnaK from Heliobacterium modesticaldum (strain ATCC 51547 / Ice1).